Reading from the N-terminus, the 275-residue chain is Formamidopyrimidine-DNA glycosylase (275 aa).

The active-site Schiff-base intermediate with DNA is the Pro-2. The Proton donor role is filled by Glu-3. Lys-58 acts as the Proton donor; for beta-elimination activity in catalysis. His-93, Arg-111, and Arg-156 together coordinate DNA. The segment at 241–275 adopts an FPG-type zinc-finger fold; it reads FVYDRAGQPCRVCNTPIRQIVQGQRSTYFCPTCQR. The Proton donor; for delta-elimination activity role is filled by Arg-265.

The protein belongs to the FPG family. Monomer. Requires Zn(2+) as cofactor.

The catalysed reaction is Hydrolysis of DNA containing ring-opened 7-methylguanine residues, releasing 2,6-diamino-4-hydroxy-5-(N-methyl)formamidopyrimidine.. It catalyses the reaction 2'-deoxyribonucleotide-(2'-deoxyribose 5'-phosphate)-2'-deoxyribonucleotide-DNA = a 3'-end 2'-deoxyribonucleotide-(2,3-dehydro-2,3-deoxyribose 5'-phosphate)-DNA + a 5'-end 5'-phospho-2'-deoxyribonucleoside-DNA + H(+). In terms of biological role, involved in base excision repair of DNA damaged by oxidation or by mutagenic agents. Acts as a DNA glycosylase that recognizes and removes damaged bases. Has a preference for oxidized purines, such as 7,8-dihydro-8-oxoguanine (8-oxoG). Has AP (apurinic/apyrimidinic) lyase activity and introduces nicks in the DNA strand. Cleaves the DNA backbone by beta-delta elimination to generate a single-strand break at the site of the removed base with both 3'- and 5'-phosphates. The sequence is that of Formamidopyrimidine-DNA glycosylase from Burkholderia lata (strain ATCC 17760 / DSM 23089 / LMG 22485 / NCIMB 9086 / R18194 / 383).